Here is a 217-residue protein sequence, read N- to C-terminus: UPF0173 metal-dependent hydrolase MJ1163 (217 aa).

This sequence belongs to the UPF0173 family.

In Methanocaldococcus jannaschii (strain ATCC 43067 / DSM 2661 / JAL-1 / JCM 10045 / NBRC 100440) (Methanococcus jannaschii), this protein is UPF0173 metal-dependent hydrolase MJ1163.